The following is a 558-amino-acid chain: Dihydroxy-acid dehydratase (558 aa).

C50 contributes to the [2Fe-2S] cluster binding site. D82 contacts Mg(2+). C123 is a binding site for [2Fe-2S] cluster. D124 and K125 together coordinate Mg(2+). Residue K125 is modified to N6-carboxylysine. C195 is a [2Fe-2S] cluster binding site. Residue E447 coordinates Mg(2+). S472 serves as the catalytic Proton acceptor.

It belongs to the IlvD/Edd family. Homodimer. It depends on [2Fe-2S] cluster as a cofactor. Requires Mg(2+) as cofactor.

The catalysed reaction is (2R)-2,3-dihydroxy-3-methylbutanoate = 3-methyl-2-oxobutanoate + H2O. It carries out the reaction (2R,3R)-2,3-dihydroxy-3-methylpentanoate = (S)-3-methyl-2-oxopentanoate + H2O. Its pathway is amino-acid biosynthesis; L-isoleucine biosynthesis; L-isoleucine from 2-oxobutanoate: step 3/4. It participates in amino-acid biosynthesis; L-valine biosynthesis; L-valine from pyruvate: step 3/4. Its function is as follows. Functions in the biosynthesis of branched-chain amino acids. Catalyzes the dehydration of (2R,3R)-2,3-dihydroxy-3-methylpentanoate (2,3-dihydroxy-3-methylvalerate) into 2-oxo-3-methylpentanoate (2-oxo-3-methylvalerate) and of (2R)-2,3-dihydroxy-3-methylbutanoate (2,3-dihydroxyisovalerate) into 2-oxo-3-methylbutanoate (2-oxoisovalerate), the penultimate precursor to L-isoleucine and L-valine, respectively. This Saccharolobus islandicus (strain M.16.27) (Sulfolobus islandicus) protein is Dihydroxy-acid dehydratase.